An 875-amino-acid polypeptide reads, in one-letter code: DNA mismatch repair protein MutS (875 aa).

Residue 625-632 (GPNMGGKS) participates in ATP binding.

This sequence belongs to the DNA mismatch repair MutS family.

Functionally, this protein is involved in the repair of mismatches in DNA. It is possible that it carries out the mismatch recognition step. This protein has a weak ATPase activity. The protein is DNA mismatch repair protein MutS of Symbiobacterium thermophilum (strain DSM 24528 / JCM 14929 / IAM 14863 / T).